The primary structure comprises 579 residues: Fatty-acid amide hydrolase 1 (579 aa).

Residues 9–29 (ALSGLSGVCLACSLLSAAVVL) form a helical membrane-spanning segment. Residues 30-403 (RWTRSQTARG…GDFVDPCLGD (374 aa)) lie on the Cytoplasmic side of the membrane. K142 (charge relay system) is an active-site residue. Residues M191, S217, and 238–241 (IGGS) contribute to the substrate site. S217 (charge relay system) is an active-site residue. The Acyl-ester intermediate role is filled by S241. Residue S241 is modified to Phosphoserine. The stretch at 404-433 (LVLVLKLPRWFKKLLSFLLKPLFPRLAAFL) is an intramembrane region. The Cytoplasmic segment spans residues 434-579 (NSMCPRSAEK…RLMTPEKRPS (146 aa)).

Belongs to the amidase family. In terms of assembly, homodimer.

It is found in the endoplasmic reticulum membrane. The protein localises to the golgi apparatus membrane. It catalyses the reaction N-(5Z,8Z,11Z,14Z-eicosatetraenoyl)-ethanolamine + H2O = ethanolamine + (5Z,8Z,11Z,14Z)-eicosatetraenoate. The enzyme catalyses (9Z)-octadecenamide + H2O = (9Z)-octadecenoate + NH4(+). The catalysed reaction is 2-(5Z,8Z,11Z,14Z-eicosatetraenoyl)-glycerol + H2O = glycerol + (5Z,8Z,11Z,14Z)-eicosatetraenoate + H(+). It carries out the reaction N-(9Z-hexadecenoyl) ethanolamine + H2O = (9Z)-hexadecenoate + ethanolamine. It catalyses the reaction N-(9Z-octadecenoyl) ethanolamine + H2O = ethanolamine + (9Z)-octadecenoate. The enzyme catalyses N-octadecanoyl ethanolamine + H2O = octadecanoate + ethanolamine. The catalysed reaction is N-docosanoyl-ethanolamine + H2O = docosanoate + ethanolamine. It carries out the reaction N-tetracosanoyl-taurine + H2O = tetracosanoate + taurine. It catalyses the reaction N-(15Z-tetracosenoyl)-ethanolamine + H2O = (15Z)-tetracosenoate + ethanolamine. The enzyme catalyses N-(9Z-octadecenoyl)-taurine + H2O = taurine + (9Z)-octadecenoate. The catalysed reaction is N-docosanoyl-taurine + H2O = docosanoate + taurine. It carries out the reaction N-(15Z-tetracosenoyl)-taurine + H2O = (15Z)-tetracosenoate + taurine. It catalyses the reaction N-tricosanoyl-taurine + H2O = tricosanoate + taurine. The enzyme catalyses (9Z,12Z,15Z)-octadecatrienamide + H2O = (9Z,12Z,15Z)-octadecatrienoate + NH4(+). The catalysed reaction is (5Z,8Z,11Z,14Z)-eicosatetraenamide + H2O = (5Z,8Z,11Z,14Z)-eicosatetraenoate + NH4(+). It carries out the reaction (6Z)-octadecenamide + H2O = (6Z)-octadecenoate + NH4(+). It catalyses the reaction (15Z)-tetracosenamide + H2O = (15Z)-tetracosenoate + NH4(+). The enzyme catalyses (8Z,11Z,14Z)-eicosatrienamide + H2O = (8Z,11Z,14Z)-eicosatrienoate + NH4(+). The catalysed reaction is (11Z,14Z,17Z)-eicosatrienamide + H2O = (11Z,14Z,17Z)-eicosatrienoate + NH4(+). It carries out the reaction (11Z,14Z)-eicosadienamide + H2O = (11Z,14Z)-eicosadienoate + NH4(+). It catalyses the reaction (9Z,12Z)-octadecadienamide + H2O = (9Z,12Z)-octadecadienoate + NH4(+). The enzyme catalyses tetradecamide + H2O = tetradecanoate + NH4(+). The catalysed reaction is 1-O-methyl-(5Z,8Z,11Z,14Z)-eicosatetraenoate + H2O = methanol + (5Z,8Z,11Z,14Z)-eicosatetraenoate + H(+). It carries out the reaction (11Z)-eicosenamide + H2O = (11Z)-eicosenoate + NH4(+). It catalyses the reaction (9Z)-octadecenoate + glycine = N-(9Z-octadecenoyl)glycine + H2O. The enzyme catalyses N-(5Z,8Z,11Z,14Z)-eicosatetraenoyl-glycine + H2O = (5Z,8Z,11Z,14Z)-eicosatetraenoate + glycine. The catalysed reaction is N-(5Z,8Z,11Z,14Z-eicosatetraenoyl)-L-serine + H2O = (5Z,8Z,11Z,14Z)-eicosatetraenoate + L-serine. Its activity is regulated as follows. Inhibited the trifluoromethyl compound PF-3845. Functionally, catalyzes the hydrolysis of endogenous amidated lipids like the endocannabinoid anandamide (N-(5Z,8Z,11Z,14Z-eicosatetraenoyl)-ethanolamine), as well as other fatty amides such as the taurine-conjugated fatty acids (a structural class of central nervous system (CNS) metabolites), to their corresponding fatty acids, thereby regulating the signaling functions of these molecules. FAAH cooperates with PM20D1 in the hydrolysis of amino acid-conjugated fatty acids such as N-fatty acyl glycine and N-fatty acyl-L-serine, thereby acting as a physiological regulator of specific subsets of intracellular, but not of extracellular, N-fatty acyl amino acids. It can also catalyze the hydrolysis of the endocannabinoid 2-arachidonoylglycerol (2-(5Z,8Z,11Z,14Z-eicosatetraenoyl)-glycerol). This Mus musculus (Mouse) protein is Fatty-acid amide hydrolase 1 (Faah).